The following is a 505-amino-acid chain: RNA-splicing ligase RtcB homolog (505 aa).

Positions 119, 122, 227, and 259 each coordinate Mn(2+). Position 226 to 230 (226 to 230) interacts with GMP; it reads NHYAE. Position 300 is a phosphoserine (Ser-300). His-353 serves as a coordination point for Mn(2+). GMP is bound by residues 353–354, 402–405, Ser-409, and 428–431; these read HN, GGTM, and HGAG. The active-site GMP-histidine intermediate is His-428. Lys-496 is covalently cross-linked (Glycyl lysine isopeptide (Lys-Gly) (interchain with G-Cter in SUMO2)). Position 504 (Lys-504) interacts with GMP.

This sequence belongs to the RtcB family. In terms of assembly, catalytic component of the tRNA-splicing ligase complex. Mn(2+) is required as a cofactor.

The protein localises to the nucleus. It is found in the cytoplasm. It carries out the reaction a 3'-end 3'-phospho-ribonucleotide-RNA + a 5'-end dephospho-ribonucleoside-RNA + GTP = a ribonucleotidyl-ribonucleotide-RNA + GMP + diphosphate. The catalysed reaction is a 3'-end 2',3'-cyclophospho-ribonucleotide-RNA + a 5'-end dephospho-ribonucleoside-RNA + GTP + H2O = a ribonucleotidyl-ribonucleotide-RNA + GMP + diphosphate + H(+). Its function is as follows. Catalytic subunit of the tRNA-splicing ligase complex that acts by directly joining spliced tRNA halves to mature-sized tRNAs by incorporating the precursor-derived splice junction phosphate into the mature tRNA as a canonical 3',5'-phosphodiester. May act as an RNA ligase with broad substrate specificity, and may function toward other RNAs. This Macaca fascicularis (Crab-eating macaque) protein is RNA-splicing ligase RtcB homolog.